The following is a 76-amino-acid chain: Acyl carrier protein (76 aa).

Residues Ser-2–Thr-76 enclose the Carrier domain. O-(pantetheine 4'-phosphoryl)serine is present on Ser-36.

It belongs to the acyl carrier protein (ACP) family. Post-translationally, 4'-phosphopantetheine is transferred from CoA to a specific serine of apo-ACP by AcpS. This modification is essential for activity because fatty acids are bound in thioester linkage to the sulfhydryl of the prosthetic group.

The protein resides in the cytoplasm. It functions in the pathway lipid metabolism; fatty acid biosynthesis. Carrier of the growing fatty acid chain in fatty acid biosynthesis. The polypeptide is Acyl carrier protein (Methylococcus capsulatus (strain ATCC 33009 / NCIMB 11132 / Bath)).